The sequence spans 150 residues: Ribonuclease H (150 aa).

The 141-residue stretch at 1 to 141 folds into the RNase H type-1 domain; it reads MKSIEVHTDG…VDVLARNQAI (141 aa). Residues aspartate 9, glutamate 47, aspartate 69, and aspartate 133 each contribute to the Mg(2+) site.

The protein belongs to the RNase H family. In terms of assembly, monomer. The cofactor is Mg(2+).

It localises to the cytoplasm. It catalyses the reaction Endonucleolytic cleavage to 5'-phosphomonoester.. Endonuclease that specifically degrades the RNA of RNA-DNA hybrids. The sequence is that of Ribonuclease H from Xanthomonas campestris pv. campestris (strain 8004).